The chain runs to 323 residues: Cyclin-H (323 aa).

At S5 the chain carries Phosphoserine; by CDK8. S132 is subject to Phosphoserine. Residues 295 to 323 form a disordered region; the sequence is KGYEDDDYVSKKPKQEEEEWTDDDLVDSL. Position 304 is a phosphoserine; by CDK8 (S304). A compositionally biased stretch (acidic residues) spans 310 to 323; the sequence is EEEEWTDDDLVDSL. T315 is subject to Phosphothreonine. At S322 the chain carries Phosphoserine.

This sequence belongs to the cyclin family. Cyclin C subfamily. As to quaternary structure, associates primarily with CDK7 and MAT1 to form the CAK complex. CAK can further associate with the core-TFIIH to form the TFIIH basal transcription factor. As to expression, expressed in both the germinal and somatic cells of the testis.

The protein localises to the nucleus. In terms of biological role, regulates CDK7, the catalytic subunit of the CDK-activating kinase (CAK) enzymatic complex. CAK activates the cyclin-associated kinases CDK1, CDK2, CDK4 and CDK6 by threonine phosphorylation. CAK complexed to the core-TFIIH basal transcription factor activates RNA polymerase II by serine phosphorylation of the repetitive C-terminal domain (CTD) of its large subunit (POLR2A), allowing its escape from the promoter and elongation of the transcripts. Involved in cell cycle control and in RNA transcription by RNA polymerase II. Its expression and activity are constant throughout the cell cycle. The chain is Cyclin-H (Ccnh) from Mus musculus (Mouse).